The sequence spans 400 residues: Acetate kinase (400 aa).

N10 contacts Mg(2+). K17 serves as a coordination point for ATP. R91 is a substrate binding site. D150 serves as the catalytic Proton donor/acceptor. ATP-binding positions include 210–214, 285–287, and 333–337; these read HLGNG, DCR, and GIGEN. E387 contributes to the Mg(2+) binding site.

This sequence belongs to the acetokinase family. Homodimer. Mg(2+) serves as cofactor. Mn(2+) is required as a cofactor.

The protein localises to the cytoplasm. The enzyme catalyses acetate + ATP = acetyl phosphate + ADP. Its pathway is metabolic intermediate biosynthesis; acetyl-CoA biosynthesis; acetyl-CoA from acetate: step 1/2. Its function is as follows. Catalyzes the formation of acetyl phosphate from acetate and ATP. Can also catalyze the reverse reaction. This chain is Acetate kinase, found in Serratia proteamaculans (strain 568).